The following is a 252-amino-acid chain: Chitooligosaccharide deacetylase (252 aa).

Residues His-61 and His-125 each contribute to the Mg(2+) site.

Belongs to the YdjC deacetylase family. ChbG subfamily. Homodimer. Mg(2+) is required as a cofactor.

The protein localises to the cytoplasm. It carries out the reaction N,N'-diacetylchitobiose + H2O = N-acetyl-beta-D-glucosaminyl-(1-&gt;4)-D-glucosamine + acetate. The catalysed reaction is diacetylchitobiose-6'-phosphate + H2O = N'-monoacetylchitobiose-6'-phosphate + acetate. It participates in glycan degradation; chitin degradation. Its function is as follows. Involved in the degradation of chitin. ChbG is essential for growth on the acetylated chitooligosaccharides chitobiose and chitotriose but is dispensable for growth on cellobiose and chitosan dimer, the deacetylated form of chitobiose. Deacetylation of chitobiose-6-P and chitotriose-6-P is necessary for both the activation of the chb promoter by the regulatory protein ChbR and the hydrolysis of phosphorylated beta-glucosides by the phospho-beta-glucosidase ChbF. Catalyzes the removal of only one acetyl group from chitobiose-6-P to yield monoacetylchitobiose-6-P, the inducer of ChbR and the substrate of ChbF. This is Chitooligosaccharide deacetylase from Salmonella schwarzengrund (strain CVM19633).